A 63-amino-acid chain; its full sequence is 2-hydroxymuconate tautomerase (63 aa).

Residue Pro2 is the Proton acceptor; via imino nitrogen of the active site.

It belongs to the 4-oxalocrotonate tautomerase family. In terms of assembly, homohexamer.

The catalysed reaction is (2Z,4E)-2-hydroxyhexa-2,4-dienedioate = (3E)-2-oxohex-3-enedioate. It functions in the pathway aromatic compound metabolism; salicylate degradation. Catalyzes the ketonization of 2-hydroxymuconate stereoselectively to yield 2-oxo-3-hexenedioate. In Pseudomonas fluorescens, this protein is 2-hydroxymuconate tautomerase (nahJ).